The following is a 326-amino-acid chain: ELMO domain-containing protein 1 (326 aa).

Positions 133–306 (QHEEMLLKLW…KFRKRIIKQL (174 aa)) constitute an ELMO domain.

Acts as a GTPase-activating protein (GAP) toward guanine nucleotide exchange factors like ARL2, ARL3, ARF1 and ARF6, but not for GTPases outside the Arf family. In Mus musculus (Mouse), this protein is ELMO domain-containing protein 1 (Elmod1).